A 292-amino-acid chain; its full sequence is Homoserine kinase (292 aa).

Position 81–91 (81–91) interacts with ATP; sequence RPRSGLGSSGA.

Belongs to the GHMP kinase family. Homoserine kinase subfamily.

The protein localises to the cytoplasm. It catalyses the reaction L-homoserine + ATP = O-phospho-L-homoserine + ADP + H(+). The protein operates within amino-acid biosynthesis; L-threonine biosynthesis; L-threonine from L-aspartate: step 4/5. Its function is as follows. Catalyzes the ATP-dependent phosphorylation of L-homoserine to L-homoserine phosphate. This is Homoserine kinase from Thermococcus kodakarensis (strain ATCC BAA-918 / JCM 12380 / KOD1) (Pyrococcus kodakaraensis (strain KOD1)).